Consider the following 365-residue polypeptide: uncharacterized protein (365 aa).

The Cytoplasmic portion of the chain corresponds to 1-133 (MVLAKQWVLK…RKLDKNKVGK (133 aa)). The chain crosses the membrane as a helical span at residues 134–154 (LWWYLSVLGGTSLTAYFIFFT). Over 155–169 (YAQLQEREEDYGKVY) the chain is Extracellular. The helical transmembrane segment at 170-190 (LISGAAGAVGTVCIQLALNVF) threads the bilayer. Residues 191–365 (KASKVIAIAG…KLITKVNNEE (175 aa)) lie on the Cytoplasmic side of the membrane.

The protein resides in the membrane. This is an uncharacterized protein from Saccharomyces cerevisiae (strain ATCC 204508 / S288c) (Baker's yeast).